Reading from the N-terminus, the 442-residue chain is Protein cereblon (442 aa).

Positions 1–45 are disordered; it reads MAGEGDQQDAAHNMGNHLPLLPAESEEEDEMEVEDQDSKEAKKPN. A compositionally biased stretch (acidic residues) spans 24–35; sequence ESEEEDEMEVED. Ser-25 is modified (phosphoserine). In terms of domain architecture, Lon N-terminal spans 81-319; the sequence is IPVLPQVMMI…CELDIMNKCT (239 aa). In terms of domain architecture, CULT spans 318–426; the sequence is CTSLCCKQCQ…LTRSALLPTI (109 aa). Zn(2+)-binding residues include Cys-323 and Cys-326. Residues His-378, Trp-380, and Trp-386 each contribute to the (S)-thalidomide site. Cys-391 and Cys-394 together coordinate Zn(2+).

This sequence belongs to the CRBN family. In terms of assembly, interacts with KCNT1. Component of a DCX (DDB1-CUL4-X-box) protein ligase complex, at least composed of CRBN, CUL4A, DDB1 and RBX1. Interacts directly with DDB1. Interacts (in pomalidomide-bound form) with IKZF1 and IKZF3. Interacts with ILF2. Interacts with TRAF6 and ECSIT. In terms of processing, ubiquitinated, ubiquitination is mediated by its own DCX protein ligase complex. Widely expressed. Highly expressed in brain.

It localises to the cytoplasm. The protein resides in the nucleus. It is found in the membrane. It functions in the pathway protein modification; protein ubiquitination. Substrate recognition component of a DCX (DDB1-CUL4-X-box) E3 protein ligase complex that mediates the ubiquitination and subsequent proteasomal degradation of target proteins, such as MEIS2, ILF2 or GLUL. Normal degradation of key regulatory proteins is required for normal limb outgrowth and expression of the fibroblast growth factor FGF8. Maintains presynaptic glutamate release and consequently cognitive functions, such as memory and learning, by negatively regulating large-conductance calcium-activated potassium (BK) channels in excitatory neurons. Likely to function by regulating the assembly and neuronal surface expression of BK channels via its interaction with KCNT1. May also be involved in regulating anxiety-like behaviors via a BK channel-independent mechanism. Plays a negative role in TLR4 signaling by interacting with TRAF6 and ECSIT, leading to inhibition of ECSIT ubiquitination, an important step of the signaling. This Homo sapiens (Human) protein is Protein cereblon (CRBN).